A 298-amino-acid chain; its full sequence is Cytochrome c oxidase subunit 2 (298 aa).

Positions 1–29 (MMAIATKRRGVAAVMSLGVATMTAVPALA) are cleaved as a signal peptide. A Pyrrolidone carboxylic acid modification is found at glutamine 30. Over 30–55 (QDVLGDLPVIGKPVNGGMNFQPASSP) the chain is Periplasmic. Residues 56-88 (LAHDQQWLDHFVLYIITAVTIFVCLLLLICIVR) traverse the membrane as a helical segment. Residues 89–103 (FNRRANPVPARFTHN) are Cytoplasmic-facing. A helical transmembrane segment spans residues 104 to 134 (TPIEVIWTLVPVLILVAIGAFSLPILFRSQE). Residues 135–280 (MPNDPDLVIK…WLAGAKEEFA (146 aa)) lie on the Periplasmic side of the membrane. Histidine 210, cysteine 245, glutamate 247, cysteine 249, histidine 253, and methionine 256 together coordinate Cu cation. Positions 281 to 298 (ADASDYLPASPVKLASAE) are cleaved as a propeptide — C-terminal propeptide.

The protein belongs to the cytochrome c oxidase subunit 2 family. The cofactor is binuclear copper center (CuA).

Its subcellular location is the cell inner membrane. The enzyme catalyses 4 Fe(II)-[cytochrome c] + O2 + 8 H(+)(in) = 4 Fe(III)-[cytochrome c] + 2 H2O + 4 H(+)(out). Subunits I and II form the functional core of the enzyme complex. Electrons originating in cytochrome c are transferred via heme a and Cu(A) to the binuclear center formed by heme a3 and Cu(B). This chain is Cytochrome c oxidase subunit 2 (ctaC), found in Paracoccus denitrificans.